We begin with the raw amino-acid sequence, 121 residues long: Putative iron-sulfur cluster insertion protein ErpA (121 aa).

Residues cysteine 49, cysteine 113, and cysteine 115 each coordinate iron-sulfur cluster.

Belongs to the HesB/IscA family. In terms of assembly, homodimer. Iron-sulfur cluster serves as cofactor.

Its function is as follows. Required for insertion of 4Fe-4S clusters. The polypeptide is Putative iron-sulfur cluster insertion protein ErpA (Methylibium petroleiphilum (strain ATCC BAA-1232 / LMG 22953 / PM1)).